Here is a 215-residue protein sequence, read N- to C-terminus: SAGA complex/transcription factor TFIID complex subunit Taf10 (215 aa).

The segment at 1–77 (MSDINNNEPA…SRERHGSNYV (77 aa)) is disordered. The span at 23–42 (GNNSMSVDEQPETSSTNLPT) shows a compositional bias: polar residues. The span at 58 to 73 (NNEDSPKSDDSRERHG) shows a compositional bias: basic and acidic residues. Positions 58–203 (NNEDSPKSDD…VDDLSAALNE (146 aa)) constitute a Histone-fold domain.

It belongs to the TAF10 family. Component of the 1.8 MDa SAGA (Spt-Ada-Gcn5 acetyltransferase) complex, which is composed of 19 subunits tra1, spt7, taf5, ngg1/ada3, sgf73, spt20, spt8, taf12, taf6, hfi1/ada1, ubp8, gcn5, ada2, spt3, sgf29, taf10, taf9, sgf11 and sus1. The SAGA complex is composed of 4 modules, namely the HAT (histone acetyltransferase) module (gcn5, ada2, ngg1/ada3 and sgf29), the DUB (deubiquitinating) module (ubp8, sgf11, sgf73 and sus1), the core or TAF (TBP-associated factor) module (taf5, taf6, taf9, taf10 and taf12), and the Tra1 or SPT (Suppressor of Ty) module (tra1, hfi1/ada1, spt3, spt7, spt8 and spt20). The Tra1/SPT module binds activators, the core module recruits TBP (TATA-binding protein), the HAT module contains the histone H3 acetyltransferase gcn5, and the DUB module comprises the histone H2B deubiquitinase ubp8. Component of the 1.2 MDa TFIID complex, which is composed of TATA-binding protein (TBP) and the 14 TBP-associated factors (TAFs). It comprises 1 copy of each taf1, taf2, taf3, taf7, taf8, taf11, taf13, 2 copies of each taf4, taf5, taf6, taf9, taf10, taf12, and 3 copies of taf14. In TFIID, taf10 heterodimerizes with taf3 and taf8.

The protein resides in the nucleus. Functionally, functions as a component of both the DNA-binding general transcription initiation factor complex TFIID and the transcription coactivator SAGA complex. Binding of TFIID to a promoter (with or without TATA element) is the initial step in pre-initiation complex (PIC) formation. TFIID plays a key role in the regulation of gene expression by RNA polymerase II through different activities such as transcription activator interaction, core promoter recognition and selectivity, TFIIA and TFIIB interaction, chromatin modification (histone acetylation by TAF1), facilitation of DNA opening and initiation of transcription. SAGA acts as a general cofactor required for essentially all RNA polymerase II transcription. At the promoters, SAGA is required for transcription pre-initiation complex (PIC) recruitment. It influences RNA polymerase II transcriptional activity through different activities such as TBP interaction (via core/TAF module) and promoter selectivity, interaction with transcription activators (via Tra1/SPT module), and chromatin modification through histone acetylation (via HAT module) and deubiquitination (via DUB module). SAGA preferentially acetylates histones H3 (to form H3K9ac, H3K14ac, H3K18ac and H3K23ac) and H2B and deubiquitinates histone H2B. SAGA interacts with DNA via upstream activating sequences (UASs). In Schizosaccharomyces pombe (strain 972 / ATCC 24843) (Fission yeast), this protein is SAGA complex/transcription factor TFIID complex subunit Taf10.